The chain runs to 81 residues: Cytochrome b559 subunit alpha (81 aa).

Residues Arg-18 and His-23 each contribute to the heme site. Residues 19–40 (YWVIHSITIPMLFIAGWLFVST) traverse the membrane as a helical segment.

This sequence belongs to the PsbE/PsbF family. As to quaternary structure, heterodimer of an alpha subunit and a beta subunit. PSII is composed of 1 copy each of membrane proteins PsbA, PsbB, PsbC, PsbD, PsbE, PsbF, PsbH, PsbI, PsbJ, PsbK, PsbL, PsbM, PsbT, PsbX, PsbY, PsbZ, Psb30/Ycf12, peripheral proteins PsbO, CyanoQ (PsbQ), PsbU, PsbV and a large number of cofactors. It forms dimeric complexes. Heme b is required as a cofactor.

Its subcellular location is the cellular thylakoid membrane. In terms of biological role, this b-type cytochrome is tightly associated with the reaction center of photosystem II (PSII). PSII is a light-driven water:plastoquinone oxidoreductase that uses light energy to abstract electrons from H(2)O, generating O(2) and a proton gradient subsequently used for ATP formation. It consists of a core antenna complex that captures photons, and an electron transfer chain that converts photonic excitation into a charge separation. The polypeptide is Cytochrome b559 subunit alpha (Synechocystis sp. (strain ATCC 27184 / PCC 6803 / Kazusa)).